A 158-amino-acid chain; its full sequence is 2-C-methyl-D-erythritol 2,4-cyclodiphosphate synthase (158 aa).

Residues D9 and H11 each contribute to the a divalent metal cation site. 4-CDP-2-C-methyl-D-erythritol 2-phosphate contacts are provided by residues 9-11 and 35-36; these read DVH and HS. H43 is an a divalent metal cation binding site. Residues 57 to 59, 62 to 66, 101 to 107, 133 to 136, F140, and R143 each bind 4-CDP-2-C-methyl-D-erythritol 2-phosphate; these read DIG, FPDTD, AQKPKMA, and TTTE.

This sequence belongs to the IspF family. As to quaternary structure, homotrimer. The cofactor is a divalent metal cation.

The catalysed reaction is 4-CDP-2-C-methyl-D-erythritol 2-phosphate = 2-C-methyl-D-erythritol 2,4-cyclic diphosphate + CMP. Its pathway is isoprenoid biosynthesis; isopentenyl diphosphate biosynthesis via DXP pathway; isopentenyl diphosphate from 1-deoxy-D-xylulose 5-phosphate: step 4/6. Its function is as follows. Involved in the biosynthesis of isopentenyl diphosphate (IPP) and dimethylallyl diphosphate (DMAPP), two major building blocks of isoprenoid compounds. Catalyzes the conversion of 4-diphosphocytidyl-2-C-methyl-D-erythritol 2-phosphate (CDP-ME2P) to 2-C-methyl-D-erythritol 2,4-cyclodiphosphate (ME-CPP) with a corresponding release of cytidine 5-monophosphate (CMP). In Bacillus cytotoxicus (strain DSM 22905 / CIP 110041 / 391-98 / NVH 391-98), this protein is 2-C-methyl-D-erythritol 2,4-cyclodiphosphate synthase.